The following is a 768-amino-acid chain: Ribonucleoside-diphosphate reductase large chain (768 aa).

ATP is bound by residues 7–8 (SK) and 13–19 (EKLGIDL). Residues T196 and S211 each coordinate GDP. C212 and C437 form a disulfide bridge. DTTP-binding positions include 220–222 (DSI), K237, and R250. N420 contributes to the GDP binding site. The Proton acceptor role is filled by N420. C422 serves as the catalytic Cysteine radical intermediate. A GDP-binding site is contributed by E424. E424 serves as the catalytic Proton acceptor.

It belongs to the ribonucleoside diphosphate reductase large chain family. In terms of assembly, heterodimer of a large and a small subunit.

It carries out the reaction a 2'-deoxyribonucleoside 5'-diphosphate + [thioredoxin]-disulfide + H2O = a ribonucleoside 5'-diphosphate + [thioredoxin]-dithiol. With respect to regulation, under complex allosteric control mediated by deoxynucleoside triphosphates and ATP binding to separate specificity and activation sites on the large subunit. The type of nucleotide bound at the specificity site determines substrate preference. It seems probable that ATP makes the enzyme reduce CDP and UDP, dGTP favors ADP reduction and dTTP favors GDP reduction. Stimulated by ATP and inhibited by dATP binding to the activity site. Functionally, provides the precursors necessary for DNA synthesis. Catalyzes the biosynthesis of deoxyribonucleotides from the corresponding ribonucleotides. The chain is Ribonucleoside-diphosphate reductase large chain from Encephalitozoon cuniculi (strain GB-M1) (Microsporidian parasite).